Reading from the N-terminus, the 273-residue chain is SAGA-associated factor 29 homolog B (273 aa).

In terms of domain architecture, SGF29 C-terminal spans 128–273; the sequence is EAYASLKGEQ…VVALPEGHRQ (146 aa). Histone H3K4me3 N-terminus binding stretches follow at residues 171–173 and 220–223; these read DEE and GTTA. Residues 245–248 are histone H3K4me3 binding; the sequence is FDDD.

Belongs to the SGF29 family. In terms of tissue distribution, expressed in roots, rosette leaves, cauline leaves, stems and flowers.

The protein resides in the nucleus. Chromatin reader component of the transcription regulatory histone acetylation (HAT) complex SAGA. This chain is SAGA-associated factor 29 homolog B, found in Arabidopsis thaliana (Mouse-ear cress).